The primary structure comprises 263 residues: S-adenosylmethionine decarboxylase proenzyme (263 aa).

Residue serine 113 is the Schiff-base intermediate with substrate; via pyruvic acid of the active site. Pyruvic acid (Ser); by autocatalysis is present on serine 113. The Proton acceptor; for processing activity role is filled by histidine 118. The active-site Proton donor; for catalytic activity is the cysteine 141.

Belongs to the prokaryotic AdoMetDC family. Type 2 subfamily. In terms of assembly, heterooctamer of four alpha and four beta chains arranged as a tetramer of alpha/beta heterodimers. It depends on pyruvate as a cofactor. In terms of processing, is synthesized initially as an inactive proenzyme. Formation of the active enzyme involves a self-maturation process in which the active site pyruvoyl group is generated from an internal serine residue via an autocatalytic post-translational modification. Two non-identical subunits are generated from the proenzyme in this reaction, and the pyruvate is formed at the N-terminus of the alpha chain, which is derived from the carboxyl end of the proenzyme. The post-translation cleavage follows an unusual pathway, termed non-hydrolytic serinolysis, in which the side chain hydroxyl group of the serine supplies its oxygen atom to form the C-terminus of the beta chain, while the remainder of the serine residue undergoes an oxidative deamination to produce ammonia and the pyruvoyl group blocking the N-terminus of the alpha chain.

The catalysed reaction is S-adenosyl-L-methionine + H(+) = S-adenosyl 3-(methylsulfanyl)propylamine + CO2. Its pathway is amine and polyamine biosynthesis; S-adenosylmethioninamine biosynthesis; S-adenosylmethioninamine from S-adenosyl-L-methionine: step 1/1. In terms of biological role, catalyzes the decarboxylation of S-adenosylmethionine to S-adenosylmethioninamine (dcAdoMet), the propylamine donor required for the synthesis of the polyamines spermine and spermidine from the diamine putrescine. This Marinobacter nauticus (strain ATCC 700491 / DSM 11845 / VT8) (Marinobacter aquaeolei) protein is S-adenosylmethionine decarboxylase proenzyme.